We begin with the raw amino-acid sequence, 452 residues long: Netrin-5 (452 aa).

An N-terminal signal peptide occupies residues 1-34 (MTDYRTLFSSPGAGSTVTTPITLSLLLLLSQATS). Cystine bridges form between C173-C182, C175-C191, C193-C202, C205-C225, C228-C240, C230-C247, C249-C258, C261-C275, C298-C376, C302-C378, and C317-C438. Laminin EGF-like domains are found at residues 173–227 (CQCH…PCLP) and 228–277 (CQCH…PCQR). An NTR domain is found at 298-438 (CQGYCNVSVS…LQQKERGGAC (141 aa)). The N-linked (GlcNAc...) asparagine glycan is linked to N303.

The protein resides in the secreted. In terms of biological role, plays a role in neurogenesis. Prevents motor neuron cell body migration out of the neural tube. This Mus musculus (Mouse) protein is Netrin-5 (Ntn5).